Consider the following 372-residue polypeptide: tRNA pseudouridine synthase D (372 aa).

Catalysis depends on aspartate 85, which acts as the Nucleophile. The TRUD domain occupies 160–330; it reads GFANYFGYQR…MQGSRRFMWG (171 aa).

Belongs to the pseudouridine synthase TruD family.

The enzyme catalyses uridine(13) in tRNA = pseudouridine(13) in tRNA. Responsible for synthesis of pseudouridine from uracil-13 in transfer RNAs. In Campylobacter jejuni subsp. jejuni serotype O:2 (strain ATCC 700819 / NCTC 11168), this protein is tRNA pseudouridine synthase D.